The primary structure comprises 239 residues: tRNA (guanine-N(7)-)-methyltransferase (239 aa).

S-adenosyl-L-methionine contacts are provided by E69, E94, D121, and D144. D144 is an active-site residue. K148 contacts substrate. The interaction with RNA stretch occupies residues 150–155; sequence RHNKRR. Residues D180 and 217-220 each bind substrate; that span reads TKFE.

This sequence belongs to the class I-like SAM-binding methyltransferase superfamily. TrmB family. Monomer.

It catalyses the reaction guanosine(46) in tRNA + S-adenosyl-L-methionine = N(7)-methylguanosine(46) in tRNA + S-adenosyl-L-homocysteine. The protein operates within tRNA modification; N(7)-methylguanine-tRNA biosynthesis. Catalyzes the formation of N(7)-methylguanine at position 46 (m7G46) in tRNA. This is tRNA (guanine-N(7)-)-methyltransferase from Shigella dysenteriae serotype 1 (strain Sd197).